A 343-amino-acid chain; its full sequence is Transmembrane protein 120A (343 aa).

The Cytoplasmic portion of the chain corresponds to methionine 1–glutamate 132. Residue lysine 130 participates in CoA binding. Residues tyrosine 133–arginine 152 traverse the membrane as a helical segment. The Extracellular segment spans residues phenylalanine 153 to arginine 158. A helical transmembrane segment spans residues valine 159–isoleucine 177. At arginine 178–lysine 190 the chain is on the cytoplasmic side. CoA contacts are provided by serine 187 and arginine 188. The chain crosses the membrane as a helical span at residues glycine 191–threonine 209. Residues tryptophan 210–lysine 218 are Extracellular-facing. Residues phenylalanine 219 to tyrosine 240 form a helical membrane-spanning segment. Residues glutamine 237, tyrosine 240, glutamine 241, and histidine 283 each contribute to the CoA site. Residues glutamine 241–arginine 270 lie on the Cytoplasmic side of the membrane. The helical transmembrane segment at glycine 271 to phenylalanine 294 threads the bilayer. The Extracellular portion of the chain corresponds to asparagine 295–glutamate 304. Residues tryptophan 305 to histidine 330 form a helical membrane-spanning segment. Over histidine 331–aspartate 343 the chain is Cytoplasmic. Lysine 332 contacts CoA.

This sequence belongs to the TMEM120 family. In terms of assembly, homodimer. Forms heterooligomer with TMEM120B. Interacts with PKD2; TMEM120A inhibits PKD2 channel activity through the physical association of PKD2 with TMEM120A. Interacts (via C-terminal domain) with STING1; regulates the trafficking of STING1 from the ER to the ER-Golgi intermediate compartment to elicit antiviral effects. Expressed in nociceptors.

The protein localises to the cell membrane. Its subcellular location is the nucleus inner membrane. The protein resides in the endoplasmic reticulum. Functionally, multifunctional protein involved in mechanosensation, and plays an essential role in lipid metabolism and adipocyte differentiation. May function as a potential ion channel involved in sensing mechanical stimuli. Mediates the mechanosensitivity of the PKD2-TMEM120A channel complex through direct physical interaction. TMEM120A seems to affect mechanosensation by inhibiting PIEZO2 channels, possibly by altering cellular lipid content. TMEM120A is structurally similar to a lipid-modifying enzyme, ELOVL7, and contains a bound coenzyme A molecule, which suggests it might function as an enzyme in lipid metabolism. Additionnaly, implicated in innate immune response against Zika virus. Acts as a key activator of the antiviral signaling involving STING1. This Homo sapiens (Human) protein is Transmembrane protein 120A.